We begin with the raw amino-acid sequence, 196 residues long: Holliday junction resolvase RecU (196 aa).

Residues threonine 82, aspartate 84, glutamate 97, and glutamine 116 each contribute to the Mg(2+) site.

The protein belongs to the RecU family. Mg(2+) serves as cofactor.

Its subcellular location is the cytoplasm. It carries out the reaction Endonucleolytic cleavage at a junction such as a reciprocal single-stranded crossover between two homologous DNA duplexes (Holliday junction).. Endonuclease that resolves Holliday junction intermediates in genetic recombination. Cleaves mobile four-strand junctions by introducing symmetrical nicks in paired strands. Promotes annealing of linear ssDNA with homologous dsDNA. Required for DNA repair, homologous recombination and chromosome segregation. This Oceanobacillus iheyensis (strain DSM 14371 / CIP 107618 / JCM 11309 / KCTC 3954 / HTE831) protein is Holliday junction resolvase RecU.